We begin with the raw amino-acid sequence, 388 residues long: Quinolone resistance protein NorA (388 aa).

12 helical membrane-spanning segments follow: residues 5 to 25 (IFVLYFNIFLIFLGIGLVIPV), 42 to 62 (LLVAAFALSQMIISPFGGTLA), 69 to 89 (LIICIGLILFSVSEFMFAVGH), 99 to 119 (VIGGMSAGMVMPGVTGLIADI), 129 to 149 (FGYMSAIINSGFILGPGIGGF), 157 to 177 (MPFYFAGALGILAFIMSIVLI), 201 to 221 (WKVFITPVILTLVLSLGLSAF), 239 to 259 (DISIAITGGGIFGALFQIYFF), 269 to 289 (LTFIAWSLLYSVVVLILLVFA), 293 to 313 (WSIMLISFVVFIGFDMIRPAI), 331 to 351 (LNSTFTSMGNFIGPLIAGALF), and 355 to 375 (IEAPIYMAIGVSLAGVVIVLI).

Belongs to the major facilitator superfamily. TCR/Tet family.

It is found in the cell membrane. In terms of biological role, involved in quinolone resistance. May constitute a membrane-associated active efflux pump of hydrophilic quinolones. The protein is Quinolone resistance protein NorA (norA) of Staphylococcus aureus (strain MSSA476).